The chain runs to 201 residues: Large ribosomal subunit protein uL4 (201 aa).

Residues 44–71 (RAQKTRAEVSGSGKKPWRQKGTGRARSG) form a disordered region.

The protein belongs to the universal ribosomal protein uL4 family. Part of the 50S ribosomal subunit.

Its function is as follows. One of the primary rRNA binding proteins, this protein initially binds near the 5'-end of the 23S rRNA. It is important during the early stages of 50S assembly. It makes multiple contacts with different domains of the 23S rRNA in the assembled 50S subunit and ribosome. In terms of biological role, forms part of the polypeptide exit tunnel. This is Large ribosomal subunit protein uL4 from Photorhabdus laumondii subsp. laumondii (strain DSM 15139 / CIP 105565 / TT01) (Photorhabdus luminescens subsp. laumondii).